The chain runs to 183 residues: Akirin-1B (183 aa).

The disordered stretch occupies residues Glu-14 to Gly-43. The short motif at Ser-180–Ser-183 is the SYVS motif element.

Belongs to the akirin family.

It is found in the nucleus. Its function is as follows. Molecular adapter that acts as a bridge between proteins, and which is involved skeletal muscle development. Functions as a signal transducer for MSTN during skeletal muscle regeneration and myogenesis. This chain is Akirin-1B (akirin1-b), found in Xenopus laevis (African clawed frog).